Reading from the N-terminus, the 634-residue chain is 1-deoxy-D-xylulose-5-phosphate synthase (634 aa).

Residues His-74 and 115 to 117 (AHS) contribute to the thiamine diphosphate site. Position 146 (Asp-146) interacts with Mg(2+). Residues 147-148 (GA), Asn-176, Tyr-283, and Glu-365 contribute to the thiamine diphosphate site. Mg(2+) is bound at residue Asn-176.

This sequence belongs to the transketolase family. DXPS subfamily. In terms of assembly, homodimer. Requires Mg(2+) as cofactor. Thiamine diphosphate serves as cofactor.

It carries out the reaction D-glyceraldehyde 3-phosphate + pyruvate + H(+) = 1-deoxy-D-xylulose 5-phosphate + CO2. Its pathway is metabolic intermediate biosynthesis; 1-deoxy-D-xylulose 5-phosphate biosynthesis; 1-deoxy-D-xylulose 5-phosphate from D-glyceraldehyde 3-phosphate and pyruvate: step 1/1. Catalyzes the acyloin condensation reaction between C atoms 2 and 3 of pyruvate and glyceraldehyde 3-phosphate to yield 1-deoxy-D-xylulose-5-phosphate (DXP). The chain is 1-deoxy-D-xylulose-5-phosphate synthase from Burkholderia thailandensis (strain ATCC 700388 / DSM 13276 / CCUG 48851 / CIP 106301 / E264).